A 55-amino-acid polypeptide reads, in one-letter code: uncharacterized protein (55 aa).

The interval 1-30 (MDKPTVETSAAPVETLVLTEPPAETQAEDS) is disordered.

This is an uncharacterized protein from Frog virus 3 (isolate Goorha) (FV-3).